A 604-amino-acid chain; its full sequence is Cell division cycle protein CDT1 (604 aa).

The protein belongs to the Cdt1 family. As to quaternary structure, associates with the MCM2-7 complex. Interacts with MCM2, ORC1, ORC2 and ORC6.

The protein resides in the cytoplasm. The protein localises to the nucleus. In terms of biological role, DNA replication licensing factor, required for pre-replication complex assembly. Faithful duplication of the genetic material requires 'once per cell cycle' DNA replication initiation and elongation. Central to this control is the tightly regulated formation of prereplicative complexes (preRCs) at future origins of DNA replication. Required for the recruitment of the MCM2-7 helicase complex to the replication origins. The protein is Cell division cycle protein CDT1 (TAH11) of Saccharomyces cerevisiae (strain ATCC 204508 / S288c) (Baker's yeast).